The following is a 430-amino-acid chain: tRNA(Ile)-lysidine synthase (430 aa).

Position 27–32 (27–32 (SGGSDS)) interacts with ATP.

Belongs to the tRNA(Ile)-lysidine synthase family.

Its subcellular location is the cytoplasm. The enzyme catalyses cytidine(34) in tRNA(Ile2) + L-lysine + ATP = lysidine(34) in tRNA(Ile2) + AMP + diphosphate + H(+). Its function is as follows. Ligates lysine onto the cytidine present at position 34 of the AUA codon-specific tRNA(Ile) that contains the anticodon CAU, in an ATP-dependent manner. Cytidine is converted to lysidine, thus changing the amino acid specificity of the tRNA from methionine to isoleucine. This is tRNA(Ile)-lysidine synthase from Rickettsia bellii (strain RML369-C).